Consider the following 148-residue polypeptide: MTITQFKIQKLENFFGSLPKYATEHSAGMDLIAANKQPIIIKIGEIQLIPTGIAIALPDLFEAQIRPRSGLAVKHGITVANSPGTIDSDYRGEIKVILINLGKEDFIIEKGMRIAQMIISKYERILWKESNTLEETVRGSGGFGSTGV.

Residues 68-70 (RSG), Asn81, 85-87 (TID), and Lys95 each bind substrate.

It belongs to the dUTPase family. Mg(2+) is required as a cofactor.

It catalyses the reaction dUTP + H2O = dUMP + diphosphate + H(+). It functions in the pathway pyrimidine metabolism; dUMP biosynthesis; dUMP from dCTP (dUTP route): step 2/2. This enzyme is involved in nucleotide metabolism: it produces dUMP, the immediate precursor of thymidine nucleotides and it decreases the intracellular concentration of dUTP so that uracil cannot be incorporated into DNA. In Rickettsia canadensis (strain McKiel), this protein is Deoxyuridine 5'-triphosphate nucleotidohydrolase.